Consider the following 200-residue polypeptide: Prolactin (200 aa).

Cystine bridges form between Cys4–Cys11, Cys59–Cys175, and Cys192–Cys200.

This sequence belongs to the somatotropin/prolactin family. In terms of tissue distribution, pituitary gland.

The protein resides in the secreted. The sequence is that of Prolactin (prl) from Protopterus aethiopicus (Marbled lungfish).